We begin with the raw amino-acid sequence, 298 residues long: Thymidylate synthase (298 aa).

DUMP-binding positions include Arg25 and 159–160 (RR). The active-site Nucleophile is the Cys179. Residues 200 to 203 (RSVD), Asn211, and 241 to 243 (HLY) each bind dUMP. (6R)-5,10-methylene-5,6,7,8-tetrahydrofolate is bound at residue Asp203. Residue Ala297 participates in (6R)-5,10-methylene-5,6,7,8-tetrahydrofolate binding.

It belongs to the thymidylate synthase family. Bacterial-type ThyA subfamily. In terms of assembly, homodimer.

The protein localises to the cytoplasm. It carries out the reaction dUMP + (6R)-5,10-methylene-5,6,7,8-tetrahydrofolate = 7,8-dihydrofolate + dTMP. The protein operates within pyrimidine metabolism; dTTP biosynthesis. In terms of biological role, catalyzes the reductive methylation of 2'-deoxyuridine-5'-monophosphate (dUMP) to 2'-deoxythymidine-5'-monophosphate (dTMP) while utilizing 5,10-methylenetetrahydrofolate (mTHF) as the methyl donor and reductant in the reaction, yielding dihydrofolate (DHF) as a by-product. This enzymatic reaction provides an intracellular de novo source of dTMP, an essential precursor for DNA biosynthesis. This Cereibacter sphaeroides (strain ATCC 17025 / ATH 2.4.3) (Rhodobacter sphaeroides) protein is Thymidylate synthase.